A 200-amino-acid polypeptide reads, in one-letter code: Anthranilate synthase component 2 (200 aa).

The 194-residue stretch at 3 to 196 (NILLLDNIDS…IHWASLKYIT (194 aa)) folds into the Glutamine amidotransferase type-1 domain. L-glutamine is bound at residue 57-59 (GPS). C84 functions as the Nucleophile; for GATase activity in the catalytic mechanism. L-glutamine is bound by residues Q88 and 134–135 (SL). Active-site for GATase activity residues include H170 and E172.

In terms of assembly, heterotetramer consisting of two non-identical subunits: a beta subunit (TrpG) and a large alpha subunit (TrpE).

It carries out the reaction chorismate + L-glutamine = anthranilate + pyruvate + L-glutamate + H(+). Its pathway is amino-acid biosynthesis; L-tryptophan biosynthesis; L-tryptophan from chorismate: step 1/5. Functionally, part of a heterotetrameric complex that catalyzes the two-step biosynthesis of anthranilate, an intermediate in the biosynthesis of L-tryptophan. In the first step, the glutamine-binding beta subunit (TrpG) of anthranilate synthase (AS) provides the glutamine amidotransferase activity which generates ammonia as a substrate that, along with chorismate, is used in the second step, catalyzed by the large alpha subunit of AS (TrpE) to produce anthranilate. In the absence of TrpG, TrpE can synthesize anthranilate directly from chorismate and high concentrations of ammonia. This Buchnera aphidicola subsp. Acyrthosiphon pisum (strain APS) (Acyrthosiphon pisum symbiotic bacterium) protein is Anthranilate synthase component 2 (trpG).